The following is a 297-amino-acid chain: HTH-type transcriptional regulator ArgP (297 aa).

One can recognise an HTH lysR-type domain in the interval 4-60 (PDYRTLQALDAVIRERGFERAAQKLCITQSAVSQRIKQLENMFGQPLLVRTVPPRPT). Positions 21–40 (FERAAQKLCITQSAVSQRIK) form a DNA-binding region, H-T-H motif.

Belongs to the LysR transcriptional regulatory family. As to quaternary structure, homodimer.

In terms of biological role, controls the transcription of genes involved in arginine and lysine metabolism. The chain is HTH-type transcriptional regulator ArgP from Klebsiella pneumoniae subsp. pneumoniae (strain ATCC 700721 / MGH 78578).